Here is a 968-residue protein sequence, read N- to C-terminus: RNA polymerase-associated protein RapA (968 aa).

Residues 163–332 enclose the Helicase ATP-binding domain; it reads EVGRRYAPRV…FARLRLLDPD (170 aa). 176–183 is an ATP binding site; the sequence is DEVGLGKT. The DEAH box signature appears at 278 to 281; the sequence is DEAH. Positions 491-641 constitute a Helicase C-terminal domain; the sequence is RVDWLIAFLK…AFELTCPSGH (151 aa).

This sequence belongs to the SNF2/RAD54 helicase family. RapA subfamily. In terms of assembly, interacts with the RNAP. Has a higher affinity for the core RNAP than for the holoenzyme. Its ATPase activity is stimulated by binding to RNAP.

Functionally, transcription regulator that activates transcription by stimulating RNA polymerase (RNAP) recycling in case of stress conditions such as supercoiled DNA or high salt concentrations. Probably acts by releasing the RNAP, when it is trapped or immobilized on tightly supercoiled DNA. Does not activate transcription on linear DNA. Probably not involved in DNA repair. In Shewanella denitrificans (strain OS217 / ATCC BAA-1090 / DSM 15013), this protein is RNA polymerase-associated protein RapA.